A 313-amino-acid polypeptide reads, in one-letter code: Beta-lactamase (313 aa).

A signal peptide spans 1–15; sequence MQRIGVTDYTILGTV. The active-site Acyl-ester intermediate is serine 190.

It belongs to the class-C beta-lactamase family.

It catalyses the reaction a beta-lactam + H2O = a substituted beta-amino acid. Upon expression in E.coli enables the latter to utilize penicillin as a carbon source. This Burkholderia multivorans (strain ATCC 17616 / 249) protein is Beta-lactamase (penA).